The primary structure comprises 379 residues: Class V chitinase (379 aa).

An N-terminal signal peptide occupies residues 1–24 (MSSTKLISLIVSITFFLTLQCSMA). The region spanning 27-369 (VVKASYWFPA…RAASQAWDAT (343 aa)) is the GH18 domain. Glycine 99 contributes to the chitin binding site. Residue glutamate 140 is the Proton donor of the active site. Residue tyrosine 259 participates in chitin binding. 2 N-linked (GlcNAc...) asparagine glycosylation sites follow: asparagine 307 and asparagine 327. Residue tryptophan 348 coordinates chitin.

The protein belongs to the glycosyl hydrolase 18 family. Chitinase class V subfamily.

The enzyme catalyses Random endo-hydrolysis of N-acetyl-beta-D-glucosaminide (1-&gt;4)-beta-linkages in chitin and chitodextrins.. It carries out the reaction Hydrolysis of N,N'-diacetylchitobiose from the non-reducing end of chitin and chitodextrins.. The protein operates within glycan degradation; chitin degradation. Its function is as follows. Can hydrolyze glycol chitin and chitin oligosaccharides (e.g. N-acetylglucosamine) (GlcNAc)4, (GlcNAc)5 and (GlcNAc)6. Hydrolyzes N-acetylglucosamine oligomers producing dimers from the non-reducing end of the substrates. The protein is Class V chitinase of Arabidopsis thaliana (Mouse-ear cress).